Reading from the N-terminus, the 358-residue chain is Probable undecaprenyl-phosphate N-acetylglucosaminyl 1-phosphate transferase (358 aa).

11 helical membrane passes run 10 to 32 (VVAFIVSLLTVLIITPIVKRIAI), 53 to 72 (MGGLAIFIGVVAGVLASGIY), 76 to 93 (RMTAITVGAFIIIVLGIL), 105 to 127 (FLIQLGVAIMIVSTGLKMDFFSV), 137 to 157 (GWMAYPLTVLWIVGITNAINL), 164 to 181 (LAAGLSVIGLSTIAVMAL), 186 to 205 (VLILSLSLVVIASTLGFLFY), 218 to 235 (GSLFLGYSISILSLLGLY), 240 to 262 (LFSIVIPIIILGVPIFDTTFAII), 292 to 311 (MSVLVIYLIGFIFSISAIVL), and 316 to 338 (IWLSLFIIFILIIFMQIIAEVTG).

The protein belongs to the glycosyltransferase 4 family. Requires Mg(2+) as cofactor. Mn(2+) serves as cofactor.

It localises to the cell membrane. It carries out the reaction di-trans,octa-cis-undecaprenyl phosphate + UDP-N-acetyl-alpha-D-glucosamine = N-acetyl-alpha-D-glucosaminyl-di-trans,octa-cis-undecaprenyl diphosphate + UMP. It functions in the pathway cell wall biogenesis; poly(glucopyranosyl N-acetylgalactosamine 1-phosphate) teichoic acid biosynthesis. Its pathway is cell wall biogenesis; poly(glycerol phosphate) teichoic acid biosynthesis. In terms of biological role, catalyzes the formation of undecaprenyl-PP-N-acetylglucosamine. Involved in the synthesis of anionic cell-wall polymers as it mediates the initiation of the linkage unit formation that appears to be common to the two types of teichoic acids attached to the peptidoglycan of B.subtilis; may also be involved in teichuronic acid biosynthesis. This is Probable undecaprenyl-phosphate N-acetylglucosaminyl 1-phosphate transferase (tagO) from Bacillus subtilis (strain 168).